We begin with the raw amino-acid sequence, 142 residues long: Large-conductance mechanosensitive channel (142 aa).

A run of 3 helical transmembrane segments spans residues 14-34 (VMDLAVGVIIGAAFSKIVDSV), 38-58 (LVMPVVGAITGGGFDFSNYFL), and 82-102 (GNFITVLINFLILAWIIFLLI).

Belongs to the MscL family. In terms of assembly, homopentamer.

It localises to the cell inner membrane. Functionally, channel that opens in response to stretch forces in the membrane lipid bilayer. May participate in the regulation of osmotic pressure changes within the cell. The chain is Large-conductance mechanosensitive channel from Rhizobium meliloti (strain 1021) (Ensifer meliloti).